A 130-amino-acid chain; its full sequence is Small ribosomal subunit protein uS8 (130 aa).

It belongs to the universal ribosomal protein uS8 family. In terms of assembly, part of the 30S ribosomal subunit.

In terms of biological role, one of the primary rRNA binding proteins, it binds directly to 16S rRNA central domain where it helps coordinate assembly of the platform of the 30S subunit. The protein is Small ribosomal subunit protein uS8 of Methanosarcina barkeri (strain Fusaro / DSM 804).